A 452-amino-acid polypeptide reads, in one-letter code: 1-aminocyclopropane-1-carboxylate synthase 3 (452 aa).

K283 is subject to N6-(pyridoxal phosphate)lysine.

This sequence belongs to the class-I pyridoxal-phosphate-dependent aminotransferase family. Pyridoxal 5'-phosphate serves as cofactor. In terms of tissue distribution, expressed in leaves. Expressed in roots and leaf blades. Expressed at low levels in leaf sheaths and shoot bases.

The enzyme catalyses S-adenosyl-L-methionine = 1-aminocyclopropane-1-carboxylate + S-methyl-5'-thioadenosine + H(+). It participates in alkene biosynthesis; ethylene biosynthesis via S-adenosyl-L-methionine; ethylene from S-adenosyl-L-methionine: step 1/2. Catalyzes the formation of 1-aminocyclopropane-1-carboxylate, a direct precursor of ethylene in higher plants. This is 1-aminocyclopropane-1-carboxylate synthase 3 from Oryza sativa subsp. japonica (Rice).